Consider the following 265-residue polypeptide: UPF0354 protein BH3252 (265 aa).

The protein belongs to the UPF0354 family.

This Halalkalibacterium halodurans (strain ATCC BAA-125 / DSM 18197 / FERM 7344 / JCM 9153 / C-125) (Bacillus halodurans) protein is UPF0354 protein BH3252.